The following is a 383-amino-acid chain: Succinyl-diaminopimelate desuccinylase (383 aa).

His73 provides a ligand contact to Zn(2+). Residue Asp75 is part of the active site. Asp107 contacts Zn(2+). The active-site Proton acceptor is the Glu141. Residues Glu142, Glu170, and His356 each contribute to the Zn(2+) site.

This sequence belongs to the peptidase M20A family. DapE subfamily. Homodimer. Zn(2+) serves as cofactor. Requires Co(2+) as cofactor.

It carries out the reaction N-succinyl-(2S,6S)-2,6-diaminopimelate + H2O = (2S,6S)-2,6-diaminopimelate + succinate. Its pathway is amino-acid biosynthesis; L-lysine biosynthesis via DAP pathway; LL-2,6-diaminopimelate from (S)-tetrahydrodipicolinate (succinylase route): step 3/3. In terms of biological role, catalyzes the hydrolysis of N-succinyl-L,L-diaminopimelic acid (SDAP), forming succinate and LL-2,6-diaminopimelate (DAP), an intermediate involved in the bacterial biosynthesis of lysine and meso-diaminopimelic acid, an essential component of bacterial cell walls. The chain is Succinyl-diaminopimelate desuccinylase from Pseudomonas paraeruginosa (strain DSM 24068 / PA7) (Pseudomonas aeruginosa (strain PA7)).